Reading from the N-terminus, the 155-residue chain is Protein-export protein SecB (155 aa).

It belongs to the SecB family. As to quaternary structure, homotetramer, a dimer of dimers. One homotetramer interacts with 1 SecA dimer.

Its subcellular location is the cytoplasm. In terms of biological role, one of the proteins required for the normal export of preproteins out of the cell cytoplasm. It is a molecular chaperone that binds to a subset of precursor proteins, maintaining them in a translocation-competent state. It also specifically binds to its receptor SecA. The polypeptide is Protein-export protein SecB (Methylococcus capsulatus (strain ATCC 33009 / NCIMB 11132 / Bath)).